Consider the following 227-residue polypeptide: Cytochrome c oxidase subunit 2 (227 aa).

The Mitochondrial intermembrane portion of the chain corresponds to 1–14; it reads MAYPFQLGLQDATS. Residues 15–45 traverse the membrane as a helical segment; that stretch reads PIMEELLHFHDHTLMIVFLISSLVLYIISLM. The Mitochondrial matrix segment spans residues 46–59; sequence LTTKLTHTSTMDAQ. The helical transmembrane segment at 60–87 threads the bilayer; the sequence is EVETVWTILPAIILILIALPSLRILYMM. Residues 88–227 lie on the Mitochondrial intermembrane side of the membrane; sequence DEINNPSLTV…YFEAWSALMV (140 aa). Positions 161, 196, 198, 200, 204, and 207 each coordinate Cu cation. Position 198 (Glu-198) interacts with Mg(2+). A Phosphotyrosine modification is found at Tyr-218.

This sequence belongs to the cytochrome c oxidase subunit 2 family. As to quaternary structure, component of the cytochrome c oxidase (complex IV, CIV), a multisubunit enzyme composed of 14 subunits. The complex is composed of a catalytic core of 3 subunits MT-CO1, MT-CO2 and MT-CO3, encoded in the mitochondrial DNA, and 11 supernumerary subunits COX4I, COX5A, COX5B, COX6A, COX6B, COX6C, COX7A, COX7B, COX7C, COX8 and NDUFA4, which are encoded in the nuclear genome. The complex exists as a monomer or a dimer and forms supercomplexes (SCs) in the inner mitochondrial membrane with NADH-ubiquinone oxidoreductase (complex I, CI) and ubiquinol-cytochrome c oxidoreductase (cytochrome b-c1 complex, complex III, CIII), resulting in different assemblies (supercomplex SCI(1)III(2)IV(1) and megacomplex MCI(2)III(2)IV(2)). Found in a complex with TMEM177, COA6, COX18, COX20, SCO1 and SCO2. Interacts with TMEM177 in a COX20-dependent manner. Interacts with COX20. Interacts with COX16. Cu cation is required as a cofactor.

It is found in the mitochondrion inner membrane. It catalyses the reaction 4 Fe(II)-[cytochrome c] + O2 + 8 H(+)(in) = 4 Fe(III)-[cytochrome c] + 2 H2O + 4 H(+)(out). Functionally, component of the cytochrome c oxidase, the last enzyme in the mitochondrial electron transport chain which drives oxidative phosphorylation. The respiratory chain contains 3 multisubunit complexes succinate dehydrogenase (complex II, CII), ubiquinol-cytochrome c oxidoreductase (cytochrome b-c1 complex, complex III, CIII) and cytochrome c oxidase (complex IV, CIV), that cooperate to transfer electrons derived from NADH and succinate to molecular oxygen, creating an electrochemical gradient over the inner membrane that drives transmembrane transport and the ATP synthase. Cytochrome c oxidase is the component of the respiratory chain that catalyzes the reduction of oxygen to water. Electrons originating from reduced cytochrome c in the intermembrane space (IMS) are transferred via the dinuclear copper A center (CU(A)) of subunit 2 and heme A of subunit 1 to the active site in subunit 1, a binuclear center (BNC) formed by heme A3 and copper B (CU(B)). The BNC reduces molecular oxygen to 2 water molecules using 4 electrons from cytochrome c in the IMS and 4 protons from the mitochondrial matrix. This is Cytochrome c oxidase subunit 2 (MT-CO2) from Cuon alpinus (Dhole).